Here is a 202-residue protein sequence, read N- to C-terminus: Large ribosomal subunit protein uL4 (202 aa).

The interval 45-71 (HAQKNRSEVSGSGKKPWRQKGTGRARV) is disordered.

The protein belongs to the universal ribosomal protein uL4 family. In terms of assembly, part of the 50S ribosomal subunit.

Functionally, one of the primary rRNA binding proteins, this protein initially binds near the 5'-end of the 23S rRNA. It is important during the early stages of 50S assembly. It makes multiple contacts with different domains of the 23S rRNA in the assembled 50S subunit and ribosome. Its function is as follows. Forms part of the polypeptide exit tunnel. In Buchnera aphidicola subsp. Baizongia pistaciae (strain Bp), this protein is Large ribosomal subunit protein uL4.